Reading from the N-terminus, the 189-residue chain is Inner membrane-spanning protein YciB (189 aa).

Transmembrane regions (helical) follow at residues 4 to 24, 53 to 73, 76 to 96, 121 to 141, and 149 to 169; these read FFEF…DIYI, ITFG…DDVF, WKVT…QFFY, MAWA…AFSL, and FKVF…GLYI.

The protein belongs to the YciB family.

The protein localises to the cell inner membrane. In terms of biological role, plays a role in cell envelope biogenesis, maintenance of cell envelope integrity and membrane homeostasis. In Psychromonas ingrahamii (strain DSM 17664 / CCUG 51855 / 37), this protein is Inner membrane-spanning protein YciB.